We begin with the raw amino-acid sequence, 26 residues long: Coenzyme PQQ synthesis protein A (26 aa).

A cross-link (pyrroloquinoline quinone (Glu-Tyr)) is located at residues 16 to 20 (EINSY).

Belongs to the PqqA family.

The protein operates within cofactor biosynthesis; pyrroloquinoline quinone biosynthesis. Required for coenzyme pyrroloquinoline quinone (PQQ) biosynthesis. PQQ is probably formed by cross-linking a specific glutamate to a specific tyrosine residue and excising these residues from the peptide. In Gluconacetobacter diazotrophicus (strain ATCC 49037 / DSM 5601 / CCUG 37298 / CIP 103539 / LMG 7603 / PAl5), this protein is Coenzyme PQQ synthesis protein A.